The sequence spans 281 residues: 3-mercaptopyruvate sulfurtransferase (281 aa).

2 consecutive Rhodanese domains span residues Asp-17–Glu-135 and His-165–Glu-278. Residue Arg-179 participates in substrate binding. The active-site Cysteine persulfide intermediate is Cys-238. Residues Cys-238 to Ala-244 are substrate specificity.

In terms of assembly, monomer.

The protein localises to the cytoplasm. It carries out the reaction 2-oxo-3-sulfanylpropanoate + [thioredoxin]-dithiol = [thioredoxin]-disulfide + hydrogen sulfide + pyruvate + H(+). Catalyzes the transfer of sulfur from 3-mercaptopyruvate to a thiol-containing acceptor to form an intramolecular disulfide releasing hydrogen sulfide and pyruvate. May be involved in the enhancement of bacterial growth inhibition by serine. This is 3-mercaptopyruvate sulfurtransferase (sseA) from Escherichia coli (strain K12).